The following is a 139-amino-acid chain: Putative nickel-responsive regulator (139 aa).

The Ni(2+) site is built by histidine 79, histidine 90, histidine 92, and cysteine 98.

Belongs to the transcriptional regulatory CopG/NikR family. It depends on Ni(2+) as a cofactor.

Its function is as follows. Transcriptional regulator. In Geobacter metallireducens (strain ATCC 53774 / DSM 7210 / GS-15), this protein is Putative nickel-responsive regulator.